Here is a 111-residue protein sequence, read N- to C-terminus: Iron-sulfur cluster assembly protein CyaY (111 aa).

It belongs to the frataxin family.

Its function is as follows. Involved in iron-sulfur (Fe-S) cluster assembly. May act as a regulator of Fe-S biogenesis. This is Iron-sulfur cluster assembly protein CyaY from Cupriavidus taiwanensis (strain DSM 17343 / BCRC 17206 / CCUG 44338 / CIP 107171 / LMG 19424 / R1) (Ralstonia taiwanensis (strain LMG 19424)).